Reading from the N-terminus, the 355-residue chain is S-adenosylmethionine:tRNA ribosyltransferase-isomerase (355 aa).

This sequence belongs to the QueA family. Monomer.

Its subcellular location is the cytoplasm. It carries out the reaction 7-aminomethyl-7-carbaguanosine(34) in tRNA + S-adenosyl-L-methionine = epoxyqueuosine(34) in tRNA + adenine + L-methionine + 2 H(+). It functions in the pathway tRNA modification; tRNA-queuosine biosynthesis. Functionally, transfers and isomerizes the ribose moiety from AdoMet to the 7-aminomethyl group of 7-deazaguanine (preQ1-tRNA) to give epoxyqueuosine (oQ-tRNA). The polypeptide is S-adenosylmethionine:tRNA ribosyltransferase-isomerase (Erwinia tasmaniensis (strain DSM 17950 / CFBP 7177 / CIP 109463 / NCPPB 4357 / Et1/99)).